The chain runs to 200 residues: Imidazoleglycerol-phosphate dehydratase (200 aa).

It belongs to the imidazoleglycerol-phosphate dehydratase family.

It is found in the cytoplasm. It catalyses the reaction D-erythro-1-(imidazol-4-yl)glycerol 3-phosphate = 3-(imidazol-4-yl)-2-oxopropyl phosphate + H2O. Its pathway is amino-acid biosynthesis; L-histidine biosynthesis; L-histidine from 5-phospho-alpha-D-ribose 1-diphosphate: step 6/9. This is Imidazoleglycerol-phosphate dehydratase from Chlorobium phaeovibrioides (strain DSM 265 / 1930) (Prosthecochloris vibrioformis (strain DSM 265)).